The sequence spans 271 residues: Formamidopyrimidine-DNA glycosylase (271 aa).

The active-site Schiff-base intermediate with DNA is the P2. E3 serves as the catalytic Proton donor. K58 (proton donor; for beta-elimination activity) is an active-site residue. The DNA site is built by H91, R110, and R152. The FPG-type zinc finger occupies 237-271 (SIYGKKGRPCPKCGSAIRMMRLGGRSTFFCPLCQK). R261 (proton donor; for delta-elimination activity) is an active-site residue.

Belongs to the FPG family. In terms of assembly, monomer. Zn(2+) is required as a cofactor.

It catalyses the reaction Hydrolysis of DNA containing ring-opened 7-methylguanine residues, releasing 2,6-diamino-4-hydroxy-5-(N-methyl)formamidopyrimidine.. It carries out the reaction 2'-deoxyribonucleotide-(2'-deoxyribose 5'-phosphate)-2'-deoxyribonucleotide-DNA = a 3'-end 2'-deoxyribonucleotide-(2,3-dehydro-2,3-deoxyribose 5'-phosphate)-DNA + a 5'-end 5'-phospho-2'-deoxyribonucleoside-DNA + H(+). Its function is as follows. Involved in base excision repair of DNA damaged by oxidation or by mutagenic agents. Acts as a DNA glycosylase that recognizes and removes damaged bases. Has a preference for oxidized purines, such as 7,8-dihydro-8-oxoguanine (8-oxoG). Has AP (apurinic/apyrimidinic) lyase activity and introduces nicks in the DNA strand. Cleaves the DNA backbone by beta-delta elimination to generate a single-strand break at the site of the removed base with both 3'- and 5'-phosphates. The sequence is that of Formamidopyrimidine-DNA glycosylase from Geotalea daltonii (strain DSM 22248 / JCM 15807 / FRC-32) (Geobacter daltonii).